Here is a 584-residue protein sequence, read N- to C-terminus: Protein spire homolog 1 (584 aa).

Residues 1 to 30 (MANTVEADGSNDEGYEAAEEGPEDEEDEKR) form a disordered region. A KIND domain is found at 1–73 (MANTVEADGS…RALFAETMEL (73 aa)). Acidic residues predominate over residues 9–28 (GSNDEGYEAAEEGPEDEEDE). The stretch at 71-99 (MELHTFLAKVKSAKENLKKIQEMEKSDES) forms a coiled coil. WH2 domains follow at residues 147-165 (PYEMLMDDIRCKRYTLRKV) and 211-228 (LHERILEEIKAERKLRPV). Basic and acidic residues predominate over residues 224-238 (KLRPVSPEEIRRSRL). The disordered stretch occupies residues 224–366 (KLRPVSPEEI…PTNVRQFLPP (143 aa)). Serine 229 carries the phosphoserine modification. A compositionally biased stretch (polar residues) spans 242–272 (TPESTKNLMESSMVNGGLTSQTKENGLSSAE). Serine 292, serine 293, and serine 295 each carry phosphoserine. The segment covering 302–320 (KSTSSSSVSPSFPEEPVLE) has biased composition (low complexity). Threonine 337 bears the Phosphothreonine mark. A compositionally biased stretch (basic and acidic residues) spans 340–356 (PERRQPPQRRHSIEKET). The span at 357 to 366 (PTNVRQFLPP) shows a compositional bias: polar residues. Residues 384–404 (LALTVEEVMHIRQVLVKAELE) are spir-box. Residues serine 506, serine 510, and serine 563 each carry the phosphoserine modification.

It belongs to the spire family. Interacts with FMN2.

The protein localises to the cytoplasm. The protein resides in the cytoskeleton. It localises to the cytosol. Its subcellular location is the cleavage furrow. It is found in the perinuclear region. The protein localises to the cell membrane. The protein resides in the cytoplasmic vesicle membrane. In terms of biological role, acts as an actin nucleation factor, remains associated with the slow-growing pointed end of the new filament. Involved in intracellular vesicle transport along actin fibers, providing a novel link between actin cytoskeleton dynamics and intracellular transport. Required for asymmetric spindle positioning and asymmetric cell division during meiosis. Required for normal formation of the cleavage furrow and for polar body extrusion during female germ cell meiosis. Also acts in the nucleus: together with FMN2, promotes assembly of nuclear actin filaments in response to DNA damage in order to facilitate movement of chromatin and repair factors after DNA damage. In addition, promotes innate immune signaling downstream of dsRNA sensing. Mechanistically, contributes to IRF3 phosphorylation and activation downstream of MAVS and upstream of TBK1. The chain is Protein spire homolog 1 (SPIRE1) from Macaca fascicularis (Crab-eating macaque).